The following is a 165-amino-acid chain: MSWLVGALQTFGSLADVAGTVSNIVYQQRQAAQLEKQNELMETWMNKQEALQKSQMELTRDLSINGPAARVQSALDAGFDEVSARRIAGSGERVIWGNLDRPIMHAGTMDSIRQTKHLDSLSHSLATFKNGTPFGKPAPPTTKFGKPQATTAQINIGHNPGSSSV.

It belongs to the sapovirus VP2 family. Homooligomer. The portal-like structure consists in 12 copies of VP2. Interacts with capsid protein VP1.

It is found in the virion. Its subcellular location is the host cytoplasm. Its function is as follows. Minor structural protein that forms a portal-like structure at a unique three-fold axis of symmetry, following binding to the host receptor. The channel formed by VP2 may allow the delivery of the viral genome through the host endosomal membrane. The protein is Minor capsid protein VP2 of Homo sapiens (Human).